Reading from the N-terminus, the 437-residue chain is Transcription factor TGAL5 (437 aa).

Residues 33–75 (QEPYSNSQSVGSTTDSSSAQNTMSQAELVSPASMRSDSGQEQQ) form a disordered region. Residues 37-50 (SNSQSVGSTTDSSS) show a composition bias toward low complexity. Over residues 51–75 (AQNTMSQAELVSPASMRSDSGQEQQ) the composition is skewed to polar residues. Positions 126–170 (DAKTERRLAQNREAARKSRLRKKAYVQQLETSRIRLQQIEQELQR) constitute a bZIP domain. The segment at 128–148 (KTERRLAQNREAARKSRLRKK) is basic motif. Positions 154–168 (LETSRIRLQQIEQEL) are leucine-zipper. Residues 191-405 (AVMFDMDYTR…RALSSLWASR (215 aa)) enclose the DOG1 domain.

Belongs to the bZIP family. In terms of assembly, interacts with NPR5/NH4, NH5.1 and NH5.2.

Its subcellular location is the nucleus. Functionally, transcriptional regulator involved in defense response. This is Transcription factor TGAL5 from Oryza sativa subsp. japonica (Rice).